The primary structure comprises 57 residues: MAVPKRRMSRANTRSRRAQWKAEAPGLVTVSVAGQQRKVPRRLLKAARLGLVDLDKR.

The span at 1 to 19 shows a compositional bias: basic residues; it reads MAVPKRRMSRANTRSRRAQ. Residues 1 to 20 are disordered; the sequence is MAVPKRRMSRANTRSRRAQW.

It belongs to the bacterial ribosomal protein bL32 family.

The sequence is that of Large ribosomal subunit protein bL32 from Mycolicibacterium smegmatis (strain ATCC 700084 / mc(2)155) (Mycobacterium smegmatis).